The sequence spans 240 residues: Small ribosomal subunit protein uS2c (240 aa).

The protein belongs to the universal ribosomal protein uS2 family.

The protein resides in the plastid. The protein localises to the chloroplast. In Euglena gracilis, this protein is Small ribosomal subunit protein uS2c (rps2).